A 324-amino-acid polypeptide reads, in one-letter code: Phospho-N-acetylmuramoyl-pentapeptide-transferase (324 aa).

10 consecutive transmembrane segments (helical) span residues 9 to 29 (TFAV…PFLV), 53 to 73 (TMGA…FSFI), 77 to 97 (VSAA…LGFL), 117 to 137 (FLGQ…NGFA), 147 to 167 (IEVD…VGFS), 176 to 196 (LDGL…VIAF), 201 to 221 (MDVA…LLFN), 227 to 247 (IFMG…ISIL), 253 to 273 (LLLL…LQVF), and 304 to 324 (VLTF…VVIF).

It belongs to the glycosyltransferase 4 family. MraY subfamily. Mg(2+) serves as cofactor.

The protein localises to the cell membrane. The enzyme catalyses UDP-N-acetyl-alpha-D-muramoyl-L-alanyl-gamma-D-glutamyl-meso-2,6-diaminopimeloyl-D-alanyl-D-alanine + di-trans,octa-cis-undecaprenyl phosphate = di-trans,octa-cis-undecaprenyl diphospho-N-acetyl-alpha-D-muramoyl-L-alanyl-D-glutamyl-meso-2,6-diaminopimeloyl-D-alanyl-D-alanine + UMP. The protein operates within cell wall biogenesis; peptidoglycan biosynthesis. In terms of biological role, catalyzes the initial step of the lipid cycle reactions in the biosynthesis of the cell wall peptidoglycan: transfers peptidoglycan precursor phospho-MurNAc-pentapeptide from UDP-MurNAc-pentapeptide onto the lipid carrier undecaprenyl phosphate, yielding undecaprenyl-pyrophosphoryl-MurNAc-pentapeptide, known as lipid I. The chain is Phospho-N-acetylmuramoyl-pentapeptide-transferase from Listeria monocytogenes serotype 4b (strain CLIP80459).